Consider the following 316-residue polypeptide: MKIVKISPRGYCYGVVDAMVIARNAALDTSLPRPIYILGMIVHNKHVTDAFEEDGIITLDGPSRLDILDKIDSGTVIFTAHGVSPEVKQRAKEKGLTTIDATCPDVTKTHDLIEAKKAEGYHVIYIGKKNHPEPEGAVGIAPDIVHLIERADDLKTLEIPTDKILVTNQTTMSQWDVQHLMEDIQKKFPTAEFHKEICLATQVRQEAVAKQADVADLTIVVGDPKSNNSNRLAQVSQEIAGTKAYRVADVSEIKLEWLQGVENVAVTAGASTPTPITKEVIAFLEQYDPMNPATWERVRKVPLQKILPRVKVKKEQ.

Residue Cys-12 participates in [4Fe-4S] cluster binding. Residues His-43 and His-81 each coordinate (2E)-4-hydroxy-3-methylbut-2-enyl diphosphate. His-43 and His-81 together coordinate dimethylallyl diphosphate. Isopentenyl diphosphate is bound by residues His-43 and His-81. Cys-103 provides a ligand contact to [4Fe-4S] cluster. His-131 provides a ligand contact to (2E)-4-hydroxy-3-methylbut-2-enyl diphosphate. Residue His-131 coordinates dimethylallyl diphosphate. His-131 lines the isopentenyl diphosphate pocket. Glu-133 acts as the Proton donor in catalysis. Thr-170 is a (2E)-4-hydroxy-3-methylbut-2-enyl diphosphate binding site. Cys-198 lines the [4Fe-4S] cluster pocket. Positions 226, 228, and 271 each coordinate (2E)-4-hydroxy-3-methylbut-2-enyl diphosphate. Dimethylallyl diphosphate-binding residues include Ser-226, Asn-228, and Ser-271. Residues Ser-226, Asn-228, and Ser-271 each coordinate isopentenyl diphosphate.

This sequence belongs to the IspH family. The cofactor is [4Fe-4S] cluster.

It catalyses the reaction isopentenyl diphosphate + 2 oxidized [2Fe-2S]-[ferredoxin] + H2O = (2E)-4-hydroxy-3-methylbut-2-enyl diphosphate + 2 reduced [2Fe-2S]-[ferredoxin] + 2 H(+). The enzyme catalyses dimethylallyl diphosphate + 2 oxidized [2Fe-2S]-[ferredoxin] + H2O = (2E)-4-hydroxy-3-methylbut-2-enyl diphosphate + 2 reduced [2Fe-2S]-[ferredoxin] + 2 H(+). Its pathway is isoprenoid biosynthesis; dimethylallyl diphosphate biosynthesis; dimethylallyl diphosphate from (2E)-4-hydroxy-3-methylbutenyl diphosphate: step 1/1. It participates in isoprenoid biosynthesis; isopentenyl diphosphate biosynthesis via DXP pathway; isopentenyl diphosphate from 1-deoxy-D-xylulose 5-phosphate: step 6/6. Functionally, catalyzes the conversion of 1-hydroxy-2-methyl-2-(E)-butenyl 4-diphosphate (HMBPP) into a mixture of isopentenyl diphosphate (IPP) and dimethylallyl diphosphate (DMAPP). Acts in the terminal step of the DOXP/MEP pathway for isoprenoid precursor biosynthesis. The polypeptide is 4-hydroxy-3-methylbut-2-enyl diphosphate reductase (Bacillus anthracis (strain A0248)).